A 695-amino-acid polypeptide reads, in one-letter code: Eukaryotic translation initiation factor 3 subunit B (695 aa).

Basic and acidic residues predominate over residues 1–10; that stretch reads MAKKKGDEKA. Positions 1–43 are disordered; that stretch reads MAKKKGDEKANPAPQSDNEEQNFEEEPDFDDPEDFVEIPEEEL. The segment covering 17–43 has biased composition (acidic residues); sequence DNEEQNFEEEPDFDDPEDFVEIPEEEL. The region spanning 60–144 is the RRM domain; the sequence is NVVVVDGCPQ…HTFLVNLFTD (85 aa). WD repeat units lie at residues 164 to 205, 295 to 335, 338 to 373, and 444 to 486; these read KVQS…PLLL, PPDE…LLDK, IKIP…TLLE, and EIKE…APTL.

It belongs to the eIF-3 subunit B family. As to quaternary structure, component of the eukaryotic translation initiation factor 3 (eIF-3) complex.

The protein localises to the cytoplasm. Functionally, RNA-binding component of the eukaryotic translation initiation factor 3 (eIF-3) complex, which is involved in protein synthesis of a specialized repertoire of mRNAs and, together with other initiation factors, stimulates binding of mRNA and methionyl-tRNAi to the 40S ribosome. The eIF-3 complex specifically targets and initiates translation of a subset of mRNAs involved in cell proliferation. This is Eukaryotic translation initiation factor 3 subunit B from Bombyx mori (Silk moth).